A 253-amino-acid polypeptide reads, in one-letter code: Triosephosphate isomerase (253 aa).

A substrate-binding site is contributed by 8-10 (NWK). Residue His-93 is the Electrophile of the active site. Residue Glu-165 is the Proton acceptor of the active site. Substrate is bound by residues Gly-171, Ser-210, and 231-232 (GG).

This sequence belongs to the triosephosphate isomerase family. In terms of assembly, homodimer.

It is found in the cytoplasm. The catalysed reaction is D-glyceraldehyde 3-phosphate = dihydroxyacetone phosphate. Its pathway is carbohydrate biosynthesis; gluconeogenesis. It participates in carbohydrate degradation; glycolysis; D-glyceraldehyde 3-phosphate from glycerone phosphate: step 1/1. Its function is as follows. Involved in the gluconeogenesis. Catalyzes stereospecifically the conversion of dihydroxyacetone phosphate (DHAP) to D-glyceraldehyde-3-phosphate (G3P). In Francisella tularensis subsp. holarctica (strain FTNF002-00 / FTA), this protein is Triosephosphate isomerase.